The following is a 470-amino-acid chain: Sorting nexin-17 (470 aa).

The PX domain maps to 1–109 (MHFSIPETES…SFLRRAQQET (109 aa)). A 1,2-diacyl-sn-glycero-3-phospho-(1D-myo-inositol-3-phosphate)-binding residues include Arg-36, Ser-38, Lys-62, and Arg-75. The Ras-associating domain occupies 115-206 (EEVSLEVLLS…YKIVLRKSYW (92 aa)). The interval 115 to 432 (EEVSLEVLLS…DASRESMVKL (318 aa)) is FERM-like. A PTB-like F3 module region spans residues 270 to 432 (GYLRFDACVA…DASRESMVKL (163 aa)). Residues Ser-336, Ser-407, Ser-409, Ser-415, Ser-421, Ser-437, and Ser-440 each carry the phosphoserine modification. Residues 401–426 (GGTLRRSDSQQAVKSPPLLESPDASR) form a disordered region.

This sequence belongs to the sorting nexin family. In terms of assembly, monomer. Interacts with APP (via cytoplasmic YXNPXY motif). Interacts with KIF1B. Interacts with the C-termini of P-selectin, PTC, LDLR, VLDLR, LRP1 and LRP8. Interacts with KRIT1 (via N-terminus). Interacts with HRAS. Interacts with ITGB1 and ITGB5 (via NPxY motif). Interacts with CCDC22 and CCDC93; the interaction associates SNX17 with the CCC complex. Interacts (via C-terminus) with VPS26C and VPS35L; the interactions are direct and associate SNX17 with the retriever complex. Detected in brain neurons (at protein level). Broadly expressed, with highest levels in brain and placenta, and lowest levels in colon, intestine and liver.

It is found in the cytoplasm. The protein resides in the early endosome. It localises to the cytoplasmic vesicle membrane. Functionally, critical regulator of endosomal recycling of numerous surface proteins, including integrins, signaling receptor and channels. Binds to NPxY sequences in the cytoplasmic tails of target cargos. Associates with retriever and CCC complexes to prevent lysosomal degradation and promote cell surface recycling of numerous cargos such as integrins ITGB1, ITGB5 and their associated alpha subunits. Also required for maintenance of normal cell surface levels of APP and LRP1. Interacts with membranes containing phosphatidylinositol 3-phosphate (PtdIns(3P)). In Mus musculus (Mouse), this protein is Sorting nexin-17 (Snx17).